Here is a 322-residue protein sequence, read N- to C-terminus: MIGTSFPEDLDCGNFFDNMDDLMDFPGGDIDVGFGIGDSDSFPTIWTTHHDTWPAASDPLFSSNTNSDSSPELYVPFEDIVKVERPPSFVEETLVEKKEDSFSTNTDSSSSHSQFRSSSPVSVLESSSSSSQTTNTTSLVLPGKHGRPRTKRPRPPVQDKDRVKDNVCGGDSRLIIRIPKQFLSDHNKMINKKKKKKAKITSSSSSSGIDLEVNGNNVDSYSSEQYPLRKCMHCEVTKTPQWRLGPMGPKTLCNACGVRYKSGRLFPEYRPAASPTFTPALHSNSHKKVAEMRNKRCSDGSYITEENDLQGLIPNNAYIGVD.

A disordered region spans residues 93-168 (TLVEKKEDSF…DKDRVKDNVC (76 aa)). Positions 102–141 (FSTNTDSSSSHSQFRSSSPVSVLESSSSSSQTTNTTSLVL) are enriched in low complexity. Residues 144-154 (KHGRPRTKRPR) are compositionally biased toward basic residues. The Nuclear localization signal motif lies at 147-154 (RPRTKRPR). The GATA-type zinc finger occupies 225–279 (QYPLRKCMHCEVTKTPQWRLGPMGPKTLCNACGVRYKSGRLFPEYRPAASPTFTP).

Belongs to the type IV zinc-finger family. Class A subfamily.

Its subcellular location is the nucleus. Functionally, transcriptional activator that specifically binds 5'-GATA-3' or 5'-GAT-3' motifs within gene promoters. May be involved in the regulation of some light-responsive genes. This Arabidopsis thaliana (Mouse-ear cress) protein is GATA transcription factor 8 (GATA8).